A 203-amino-acid polypeptide reads, in one-letter code: Large ribosomal subunit protein uL13 (203 aa).

Alanine 2 carries the N-acetylalanine modification. Arginine 59 is modified (citrulline). Serine 77 is subject to Phosphoserine; by ZIPK/DAPK3. Arginine 140 carries the post-translational modification Citrulline. Lysine 191 carries the post-translational modification N6-acetyllysine.

The protein belongs to the universal ribosomal protein uL13 family. As to quaternary structure, component of the 60S ribosome. Component of the GAIT complex. Interacts with EIF4G1. In terms of processing, phosphorylation at Ser-77 upon interferon-gamma treatment in macrophages involves a DAPK1-DAPK3 kinase cascade and is causing release from the ribosome, association with the GAIT complex and subsequent involvement in transcript-selective translation inhibition. Citrullinated by PADI4.

The protein localises to the cytoplasm. Associated with ribosomes but is not required for canonical ribosome function and has extra-ribosomal functions. Component of the GAIT (gamma interferon-activated inhibitor of translation) complex which mediates interferon-gamma-induced transcript-selective translation inhibition in inflammation processes. Upon interferon-gamma activation and subsequent phosphorylation dissociates from the ribosome and assembles into the GAIT complex which binds to stem loop-containing GAIT elements in the 3'-UTR of diverse inflammatory mRNAs (such as ceruplasmin) and suppresses their translation. In the GAIT complex interacts with m7G cap-bound eIF4G at or near the eIF3-binding site and blocks the recruitment of the 43S ribosomal complex. Involved in methylation of rRNA. The sequence is that of Large ribosomal subunit protein uL13 (Rpl13a) from Mus musculus (Mouse).